We begin with the raw amino-acid sequence, 188 residues long: Segregation and condensation protein B (188 aa).

Belongs to the ScpB family. Homodimer. Homodimerization may be required to stabilize the binding of ScpA to the Smc head domains. Component of a cohesin-like complex composed of ScpA, ScpB and the Smc homodimer, in which ScpA and ScpB bind to the head domain of Smc. The presence of the three proteins is required for the association of the complex with DNA.

Its subcellular location is the cytoplasm. Its function is as follows. Participates in chromosomal partition during cell division. May act via the formation of a condensin-like complex containing Smc and ScpA that pull DNA away from mid-cell into both cell halves. In Lactococcus lactis subsp. cremoris (strain MG1363), this protein is Segregation and condensation protein B.